The primary structure comprises 261 residues: tRNA U34 carboxymethyltransferase (261 aa).

Carboxy-S-adenosyl-L-methionine is bound by residues lysine 25, tryptophan 39, lysine 44, glycine 63, 114 to 115, tyrosine 135, and arginine 250; that span reads VE.

The protein belongs to the class I-like SAM-binding methyltransferase superfamily. CmoB family. Homotetramer.

The catalysed reaction is carboxy-S-adenosyl-L-methionine + 5-hydroxyuridine(34) in tRNA = 5-carboxymethoxyuridine(34) in tRNA + S-adenosyl-L-homocysteine + H(+). In terms of biological role, catalyzes carboxymethyl transfer from carboxy-S-adenosyl-L-methionine (Cx-SAM) to 5-hydroxyuridine (ho5U) to form 5-carboxymethoxyuridine (cmo5U) at position 34 in tRNAs. This is tRNA U34 carboxymethyltransferase from Helicobacter pylori (strain Shi470).